An 88-amino-acid chain; its full sequence is Sec-independent protein translocase protein TatA (88 aa).

The helical transmembrane segment at 3–23 (IFGVGLPEVTVILILALLIFG) threads the bilayer. Positions 56–66 (MKEEDKDESPK) are enriched in basic and acidic residues. Residues 56–88 (MKEEDKDESPKSIESNQSNEINQEKIDSENSNN) are disordered. Polar residues predominate over residues 67–76 (SIESNQSNEI). The segment covering 77–88 (NQEKIDSENSNN) has biased composition (basic and acidic residues).

The protein belongs to the TatA/E family. In terms of assembly, forms a complex with TatC.

Its subcellular location is the cell inner membrane. Its function is as follows. Part of the twin-arginine translocation (Tat) system that transports large folded proteins containing a characteristic twin-arginine motif in their signal peptide across membranes. TatA could form the protein-conducting channel of the Tat system. This chain is Sec-independent protein translocase protein TatA, found in Prochlorococcus marinus (strain MIT 9301).